The chain runs to 449 residues: Glucose-6-phosphate isomerase (449 aa).

The Proton donor role is filled by Glu291. Active-site residues include His312 and Lys426.

It belongs to the GPI family.

It is found in the cytoplasm. The catalysed reaction is alpha-D-glucose 6-phosphate = beta-D-fructose 6-phosphate. The protein operates within carbohydrate biosynthesis; gluconeogenesis. It participates in carbohydrate degradation; glycolysis; D-glyceraldehyde 3-phosphate and glycerone phosphate from D-glucose: step 2/4. In terms of biological role, catalyzes the reversible isomerization of glucose-6-phosphate to fructose-6-phosphate. The polypeptide is Glucose-6-phosphate isomerase (Streptococcus pneumoniae serotype 4 (strain ATCC BAA-334 / TIGR4)).